The chain runs to 543 residues: MKRRKTALMMLSVLMVLAIFLSACSGSKSSNSSAKKSAGKPQQGGDLVVGSIGEPTLFNSLYSTDDASTDIENMLYSFLTKTDEKLNVKLSLAESIKELDGGLAYDVKIKKGVKFHDGKELTADDVVFTYSVPLSKDYKGERGSTYEMLKSVEKKGDYEVLFKLKYKDGNFYNNALDSTAILPKHILGNVPIADLEENEFNRKKPIGSGPFKFKEWKQGQYIKLEANDDYFEGRPYLDTVTYKVIPDANAAVAQLQAGDINFFNVPATDYKTAEKFNNLKIVTDLALSYVYIGWNEKNELFKDKKVRQALTTALDRESIVSQVLDGDGEVAYIPESPLSWNYPKDIDVPKFEYNEKKAKQMLAEAGWKDTNGDGILDKDGKKFSFTLKTNQGNKVREDIAVVVQEQLKKIGIEVKTQIVEWSALVEQMNPPNWDFDAMVMGWSLSTFPDQYDIFHSSQIKKGLNYVWYKNAEADKLMKDAKSISDRKQYSKEYEQIYQKIAEDQPYTFLYYPNNHMAMPENLEGYKYHPKRDLYNIEKWWLAK.

The signal sequence occupies residues 1 to 23 (MKRRKTALMMLSVLMVLAIFLSA). A lipid anchor (N-palmitoyl cysteine) is attached at C24. Residue C24 is the site of S-diacylglycerol cysteine attachment.

This sequence belongs to the bacterial solute-binding protein 5 family.

The protein resides in the cell membrane. This protein is a component of an oligopeptide permease, a binding protein-dependent transport system. This APP system can completely substitute for the OPP system in both sporulation and genetic competence. AppA can bind and transport tetra- and pentapeptides but not tripeptides. This chain is Oligopeptide-binding protein AppA (appA), found in Bacillus subtilis (strain 168).